A 230-amino-acid chain; its full sequence is Small ribosomal subunit protein uS7B (230 aa).

Residues 1-22 form a disordered region; that stretch reads MSEEVVESSSQEASQVIPQEQE. Residues 7-16 show a composition bias toward low complexity; sequence ESSSQEASQV.

Belongs to the universal ribosomal protein uS7 family.

This Drosophila melanogaster (Fruit fly) protein is Small ribosomal subunit protein uS7B (RpS5b).